The chain runs to 342 residues: uncharacterized protein (342 aa).

A MurNAc-LAA domain is found at Ile3–Ile173.

To C.perfringens CPE1502.

This is an uncharacterized protein from Clostridium perfringens.